Reading from the N-terminus, the 226-residue chain is Enolase-phosphatase E1 (226 aa).

It belongs to the HAD-like hydrolase superfamily. MasA/MtnC family. In terms of assembly, monomer. Mg(2+) is required as a cofactor.

It catalyses the reaction 5-methylsulfanyl-2,3-dioxopentyl phosphate + H2O = 1,2-dihydroxy-5-(methylsulfanyl)pent-1-en-3-one + phosphate. Its pathway is amino-acid biosynthesis; L-methionine biosynthesis via salvage pathway; L-methionine from S-methyl-5-thio-alpha-D-ribose 1-phosphate: step 3/6. It participates in amino-acid biosynthesis; L-methionine biosynthesis via salvage pathway; L-methionine from S-methyl-5-thio-alpha-D-ribose 1-phosphate: step 4/6. Its function is as follows. Bifunctional enzyme that catalyzes the enolization of 2,3-diketo-5-methylthiopentyl-1-phosphate (DK-MTP-1-P) into the intermediate 2-hydroxy-3-keto-5-methylthiopentenyl-1-phosphate (HK-MTPenyl-1-P), which is then dephosphorylated to form the acireductone 1,2-dihydroxy-3-keto-5-methylthiopentene (DHK-MTPene). This Shewanella oneidensis (strain ATCC 700550 / JCM 31522 / CIP 106686 / LMG 19005 / NCIMB 14063 / MR-1) protein is Enolase-phosphatase E1.